The chain runs to 508 residues: DASH complex subunit ASK1 (508 aa).

Disordered regions lie at residues 86 to 138 and 150 to 355; these read LVDG…TLSS and SRAA…QLRS. The span at 116–138 shows a compositional bias: polar residues; the sequence is EPSQYTPRPQTSAGGHDTTTLSS. Positions 161-175 are enriched in basic and acidic residues; the sequence is QHHDDSSVLTDRDGD. A compositionally biased stretch (acidic residues) spans 201 to 213; sequence DEMDIDMDEEDSE. Positions 229-238 are enriched in basic and acidic residues; it reads RYYDDDHGFE. Positions 239–258 are enriched in acidic residues; the sequence is QGEEEEDEEEEEEEEEEEEG. Residues 326-338 show a composition bias toward basic and acidic residues; it reads IKQEDTEKKRPLW.

Belongs to the DASH complex ASK1 family. In terms of assembly, component of the DASH complex consisting of ASK1, DAD1, DAD2, DAD3, DAD4, DAM1, DUO1, HSK3, SPC19 and SPC34, with a stoichiometry of one copy of each subunit per complex. Multiple DASH complexes oligomerize to form a ring that encircles spindle microtubules and organizes the rod-like NDC80 complexes of the outer kinetochore. On cytoplasmic microtubules, DASH complexes appear to form patches instead of rings.

It localises to the chromosome. The protein resides in the centromere. The protein localises to the kinetochore. It is found in the cytoplasm. Its subcellular location is the cytoskeleton. It localises to the spindle. The protein resides in the nucleus. Its function is as follows. Component of the DASH complex that connects microtubules with kinetochores and couples microtubule depolymerisation to chromosome movement; it is involved in retrieving kinetochores to the spindle poles before their re-orientation on the spindle in early mitosis and allows microtubule depolymerization to pull chromosomes apart and resist detachment during anaphase. Kinetochores, consisting of a centromere-associated inner segment and a microtubule-contacting outer segment, play a crucial role in chromosome segregation by mediating the physical connection between centromeric DNA and microtubules. Kinetochores also serve as an input point for the spindle assembly checkpoint, which delays anaphase until all chromosomes have bioriented on the mitotic spindle. This is DASH complex subunit ASK1 from Chaetomium thermophilum (strain DSM 1495 / CBS 144.50 / IMI 039719) (Thermochaetoides thermophila).